A 100-amino-acid chain; its full sequence is MIREERLLKVILGPHISEKSTVLAEKNNTVVFRVAIDATKAEIKAAVAKLFEVEVDSVRTLVNKGKTKRTGGRVGRRIDWKKAYVTLAAGAEIDFVGGAE.

This sequence belongs to the universal ribosomal protein uL23 family. Part of the 50S ribosomal subunit. Contacts protein L29, and trigger factor when it is bound to the ribosome.

Its function is as follows. One of the early assembly proteins it binds 23S rRNA. One of the proteins that surrounds the polypeptide exit tunnel on the outside of the ribosome. Forms the main docking site for trigger factor binding to the ribosome. The polypeptide is Large ribosomal subunit protein uL23 (Shewanella frigidimarina (strain NCIMB 400)).